The sequence spans 319 residues: Putative GPI-anchor transamidase (319 aa).

The N-terminal stretch at 1–16 (MRHVLLIFCAIIATEA) is a signal peptide. Catalysis depends on residues His156 and Cys198. The N-linked (GlcNAc...) asparagine glycan is linked to Asn257.

Belongs to the peptidase C13 family.

The protein operates within glycolipid biosynthesis; glycosylphosphatidylinositol-anchor biosynthesis. In terms of biological role, mediates GPI anchoring in the endoplasmic reticulum, by replacing a protein's C-terminal GPI attachment signal peptide with a pre-assembled GPI. During this transamidation reaction, the GPI transamidase forms a carbonyl intermediate with the substrate protein. The chain is Putative GPI-anchor transamidase from Caenorhabditis elegans.